The primary structure comprises 227 residues: Cytochrome c oxidase subunit 2 (227 aa).

Over 1-14 the chain is Mitochondrial intermembrane; sequence MAYPFQLGLQDATS. Residues 15 to 45 form a helical membrane-spanning segment; the sequence is PIMEELMNFHDHTLMIVFLISTLVLYIISLM. At 46-59 the chain is on the mitochondrial matrix side; sequence LTTKLTHTSTMDAQ. Residues 60–87 traverse the membrane as a helical segment; that stretch reads EVETVWTILPAVILIMIALPSLRILYMM. Topologically, residues 88–227 are mitochondrial intermembrane; it reads DEINNPVLTV…HFENWSTSMI (140 aa). H161, C196, E198, C200, H204, and M207 together coordinate Cu cation. Residue E198 coordinates Mg(2+).

The protein belongs to the cytochrome c oxidase subunit 2 family. As to quaternary structure, component of the cytochrome c oxidase (complex IV, CIV), a multisubunit enzyme composed of 14 subunits. The complex is composed of a catalytic core of 3 subunits MT-CO1, MT-CO2 and MT-CO3, encoded in the mitochondrial DNA, and 11 supernumerary subunits COX4I, COX5A, COX5B, COX6A, COX6B, COX6C, COX7A, COX7B, COX7C, COX8 and NDUFA4, which are encoded in the nuclear genome. The complex exists as a monomer or a dimer and forms supercomplexes (SCs) in the inner mitochondrial membrane with NADH-ubiquinone oxidoreductase (complex I, CI) and ubiquinol-cytochrome c oxidoreductase (cytochrome b-c1 complex, complex III, CIII), resulting in different assemblies (supercomplex SCI(1)III(2)IV(1) and megacomplex MCI(2)III(2)IV(2)). Found in a complex with TMEM177, COA6, COX18, COX20, SCO1 and SCO2. Interacts with TMEM177 in a COX20-dependent manner. Interacts with COX20. Interacts with COX16. Cu cation serves as cofactor.

It localises to the mitochondrion inner membrane. It carries out the reaction 4 Fe(II)-[cytochrome c] + O2 + 8 H(+)(in) = 4 Fe(III)-[cytochrome c] + 2 H2O + 4 H(+)(out). Component of the cytochrome c oxidase, the last enzyme in the mitochondrial electron transport chain which drives oxidative phosphorylation. The respiratory chain contains 3 multisubunit complexes succinate dehydrogenase (complex II, CII), ubiquinol-cytochrome c oxidoreductase (cytochrome b-c1 complex, complex III, CIII) and cytochrome c oxidase (complex IV, CIV), that cooperate to transfer electrons derived from NADH and succinate to molecular oxygen, creating an electrochemical gradient over the inner membrane that drives transmembrane transport and the ATP synthase. Cytochrome c oxidase is the component of the respiratory chain that catalyzes the reduction of oxygen to water. Electrons originating from reduced cytochrome c in the intermembrane space (IMS) are transferred via the dinuclear copper A center (CU(A)) of subunit 2 and heme A of subunit 1 to the active site in subunit 1, a binuclear center (BNC) formed by heme A3 and copper B (CU(B)). The BNC reduces molecular oxygen to 2 water molecules using 4 electrons from cytochrome c in the IMS and 4 protons from the mitochondrial matrix. This is Cytochrome c oxidase subunit 2 (MT-CO2) from Apodemus semotus (Taiwan field mouse).